The primary structure comprises 317 residues: MALQGWRFFGVSATIIIYIGGVLFLSMNNIPGSHPKRPRIERFAEFPSFHSPRFPMPSRKMTIRWCRDLKYINRDLPIYADYKSDFYTALPSDVSAALQSLPALTALASFPGSGNTWLRYLLQQATGILTGSIYKDYGLLKTGFPAENVCNSSVLLVKTHEWGSKAWAPFSKAILLVRDPEKAIIAEFNRQSGGHIGFASPDRYKRTKGKYWQQFVSNKLKGWEMMNLSWARNFTGSIKVVFYDDLVHHTERELRSILDFLQFPINEQLMRCAIMRKEGIFRRKKRLLSFDPYTESMRAEVQNRRRIVYGLLGRQEP.

Residues 8–28 (FFGVSATIIIYIGGVLFLSMN) traverse the membrane as a helical segment. 3 N-linked (GlcNAc...) asparagine glycosylation sites follow: Asn-151, Asn-227, and Asn-233.

The protein belongs to the WSCD family.

It is found in the membrane. This is WSCD family member CG9164 from Drosophila melanogaster (Fruit fly).